The chain runs to 526 residues: Dolichyl pyrophosphate Glc1Man9GlcNAc2 alpha-1,3-glucosyltransferase (526 aa).

Transmembrane regions (helical) follow at residues 4–24 (FGIA…VTLL), 103–122 (LLFQ…YAVH), 143–163 (FILS…HIHF), 188–208 (GAFL…VAPA), 238–258 (LISL…PFLA), 334–354 (PLAT…CLWC), 368–388 (LCAL…ILLA), 389–409 (VLPM…FLIL), 427–449 (LPIK…KTLF), 461–481 (TFYL…FPFT), and 488–508 (PFIP…YAWL).

It belongs to the ALG6/ALG8 glucosyltransferase family.

The protein localises to the endoplasmic reticulum membrane. It catalyses the reaction an alpha-D-Glc-(1-&gt;3)-alpha-D-Man-(1-&gt;2)-alpha-D-Man-(1-&gt;2)-alpha-D-Man-(1-&gt;3)-[alpha-D-Man-(1-&gt;2)-alpha-D-Man-(1-&gt;3)-[alpha-D-Man-(1-&gt;2)-alpha-D-Man-(1-&gt;6)]-alpha-D-Man-(1-&gt;6)]-beta-D-Man-(1-&gt;4)-beta-D-GlcNAc-(1-&gt;4)-alpha-D-GlcNAc-diphospho-di-trans,poly-cis-dolichol + a di-trans,poly-cis-dolichyl beta-D-glucosyl phosphate = an alpha-D-Glc-(1-&gt;3)-alpha-D-Glc-(1-&gt;3)-alpha-D-Man-(1-&gt;2)-alpha-D-Man-(1-&gt;2)-alpha-D-Man-(1-&gt;3)-[alpha-D-Man-(1-&gt;2)-alpha-D-Man-(1-&gt;3)-[alpha-D-Man-(1-&gt;2)-alpha-D-Man-(1-&gt;6)]-alpha-D-Man-(1-&gt;6)]-beta-D-Man-(1-&gt;4)-beta-D-GlcNAc-(1-&gt;4)-alpha-D-GlcNAc-diphospho-di-trans,poly-cis-dolichol + a di-trans,poly-cis-dolichyl phosphate + H(+). The protein operates within protein modification; protein glycosylation. Functionally, dolichyl pyrophosphate Glc1Man9GlcNAc2 alpha-1,3-glucosyltransferase that operates in the biosynthetic pathway of dolichol-linked oligosaccharides, the glycan precursors employed in protein asparagine (N)-glycosylation. The assembly of dolichol-linked oligosaccharides begins on the cytosolic side of the endoplasmic reticulum membrane and finishes in its lumen. The sequential addition of sugars to dolichol pyrophosphate produces dolichol-linked oligosaccharides containing fourteen sugars, including two GlcNAcs, nine mannoses and three glucoses. Once assembled, the oligosaccharide is transferred from the lipid to nascent proteins by oligosaccharyltransferases. In the lumen of the endoplasmic reticulum, adds the second glucose residue from dolichyl phosphate glucose (Dol-P-Glc) onto the lipid-linked oligosaccharide intermediate Glc(1)Man(9)GlcNAc(2)-PP-Dol to produce Glc(2)Man(9)GlcNAc(2)-PP-Dol. Glc(2)Man(9)GlcNAc(2)-PP-Dol is a substrate for ALG10, the following enzyme in the biosynthetic pathway. Required for PKD1/Polycystin-1 maturation and localization to the plasma membrane of the primary cilia. The polypeptide is Dolichyl pyrophosphate Glc1Man9GlcNAc2 alpha-1,3-glucosyltransferase (Bos taurus (Bovine)).